Consider the following 238-residue polypeptide: Uridylate kinase (238 aa).

ATP is bound at residue 10–13 (KFSG). The involved in allosteric activation by GTP stretch occupies residues 18–23 (GGNGFG). Gly52 serves as a coordination point for UMP. The ATP site is built by Gly53 and Arg57. Residues Asp73 and 134–141 (TGNPFFTT) each bind UMP. Positions 161, 167, and 170 each coordinate ATP.

The protein belongs to the UMP kinase family. As to quaternary structure, homohexamer.

The protein resides in the cytoplasm. The enzyme catalyses UMP + ATP = UDP + ADP. Its pathway is pyrimidine metabolism; CTP biosynthesis via de novo pathway; UDP from UMP (UMPK route): step 1/1. With respect to regulation, allosterically activated by GTP. Inhibited by UTP. In terms of biological role, catalyzes the reversible phosphorylation of UMP to UDP. This Campylobacter fetus subsp. fetus (strain 82-40) protein is Uridylate kinase.